The chain runs to 289 residues: Ribosomal RNA small subunit methyltransferase A (289 aa).

The S-adenosyl-L-methionine site is built by asparagine 28, leucine 30, glycine 55, glutamate 76, aspartate 101, and asparagine 125.

This sequence belongs to the class I-like SAM-binding methyltransferase superfamily. rRNA adenine N(6)-methyltransferase family. RsmA subfamily.

The protein localises to the cytoplasm. It catalyses the reaction adenosine(1518)/adenosine(1519) in 16S rRNA + 4 S-adenosyl-L-methionine = N(6)-dimethyladenosine(1518)/N(6)-dimethyladenosine(1519) in 16S rRNA + 4 S-adenosyl-L-homocysteine + 4 H(+). In terms of biological role, specifically dimethylates two adjacent adenosines (A1518 and A1519) in the loop of a conserved hairpin near the 3'-end of 16S rRNA in the 30S particle. May play a critical role in biogenesis of 30S subunits. The protein is Ribosomal RNA small subunit methyltransferase A of Clostridioides difficile (strain 630) (Peptoclostridium difficile).